The following is a 21-amino-acid chain: Serine protease inhibitor 1 (21 aa).

The Pacifastin domain occupies glutamate 1–aspartate 21. The tract at residues glutamate 1–aspartate 21 is disordered.

Belongs to the protease inhibitor I19 family. In terms of tissue distribution, expressed in hemolymph.

It localises to the secreted. Probable serine protease inhibitor. This Melanoplus sanguinipes (Migratory grasshopper) protein is Serine protease inhibitor 1.